We begin with the raw amino-acid sequence, 411 residues long: Na(+)-translocating NADH-quinone reductase subunit F (411 aa).

Residues 5–25 form a helical membrane-spanning segment; it reads VILALGIAAFTVIVLVLVAII. The 2Fe-2S ferredoxin-type domain occupies 36–130; sequence GDITIDINDD…NMEVELPEEI (95 aa). [2Fe-2S] cluster is bound by residues C73, C79, C82, and C114. The region spanning 133–273 is the FAD-binding FR-type domain; it reads VKKWECTVIS…SGPFGEFFAK (141 aa).

Belongs to the NqrF family. Composed of six subunits; NqrA, NqrB, NqrC, NqrD, NqrE and NqrF. [2Fe-2S] cluster serves as cofactor. Requires FAD as cofactor.

It is found in the cell inner membrane. It catalyses the reaction a ubiquinone + n Na(+)(in) + NADH + H(+) = a ubiquinol + n Na(+)(out) + NAD(+). Its function is as follows. NQR complex catalyzes the reduction of ubiquinone-1 to ubiquinol by two successive reactions, coupled with the transport of Na(+) ions from the cytoplasm to the periplasm. The first step is catalyzed by NqrF, which accepts electrons from NADH and reduces ubiquinone-1 to ubisemiquinone by a one-electron transfer pathway. The chain is Na(+)-translocating NADH-quinone reductase subunit F from Haemophilus influenzae (strain 86-028NP).